We begin with the raw amino-acid sequence, 394 residues long: Phosphoglycerate kinase (394 aa).

Substrate contacts are provided by residues 21-23 (DFN), Arg-36, 59-62 (HLGR), Arg-118, and Arg-151. Position 183 is a phosphoserine (Ser-183). Residue Lys-201 coordinates ATP. The residue at position 299 (Thr-299) is a Phosphothreonine. ATP-binding positions include Glu-323 and 350 to 353 (GGDS).

This sequence belongs to the phosphoglycerate kinase family. In terms of assembly, monomer.

The protein localises to the cytoplasm. It catalyses the reaction (2R)-3-phosphoglycerate + ATP = (2R)-3-phospho-glyceroyl phosphate + ADP. Its pathway is carbohydrate degradation; glycolysis; pyruvate from D-glyceraldehyde 3-phosphate: step 2/5. The protein is Phosphoglycerate kinase of Bacillus pumilus (strain SAFR-032).